The chain runs to 122 residues: Holo-[acyl-carrier-protein] synthase (122 aa).

Residues Asp-5 and Glu-54 each coordinate Mg(2+).

This sequence belongs to the P-Pant transferase superfamily. AcpS family. Requires Mg(2+) as cofactor.

Its subcellular location is the cytoplasm. The enzyme catalyses apo-[ACP] + CoA = holo-[ACP] + adenosine 3',5'-bisphosphate + H(+). Functionally, transfers the 4'-phosphopantetheine moiety from coenzyme A to a Ser of acyl-carrier-protein. This Aquifex aeolicus (strain VF5) protein is Holo-[acyl-carrier-protein] synthase.